We begin with the raw amino-acid sequence, 233 residues long: H-2 class II histocompatibility antigen, A-F alpha chain (233 aa).

Residues 1–88 (EDDIEADHVG…KRSNFTPATN (88 aa)) are alpha-1. Residues 1–195 (EDDIEADHVG…IPAPMSELTE (195 aa)) are Extracellular-facing. The segment at 89 to 182 (EAPQATVFPK…GLEEPVLKHW (94 aa)) is alpha-2. The region spanning 91 to 183 (PQATVFPKSP…LEEPVLKHWE (93 aa)) is the Ig-like C1-type domain. A disulfide bond links Cys111 and Cys167. The N-linked (GlcNAc...) asparagine glycan is linked to Asn122. A connecting peptide region spans residues 183-195 (EPEIPAPMSELTE). The helical transmembrane segment at 196–221 (TVVCALGLSVGLVGIVVGTIFIIQGL) threads the bilayer. At 222–233 (RSGGTSRHPGPL) the chain is on the cytoplasmic side.

Belongs to the MHC class II family.

Its subcellular location is the membrane. The polypeptide is H-2 class II histocompatibility antigen, A-F alpha chain (H2-Aa) (Mus musculus (Mouse)).